The primary structure comprises 54 residues: UPF0391 membrane protein BMEI0373 (54 aa).

A run of 2 helical transmembrane segments spans residues 5-25 (VLVF…GIAG) and 29-48 (GIAQ…SLIA).

It belongs to the UPF0391 family.

It is found in the cell membrane. The chain is UPF0391 membrane protein BMEI0373 from Brucella melitensis biotype 1 (strain ATCC 23456 / CCUG 17765 / NCTC 10094 / 16M).